A 157-amino-acid chain; its full sequence is Nuclear cap-binding protein subunit 2 (157 aa).

MRNA-binding positions include Y17, Y40, 109–113 (RADWD), 120–124 (RQYGR), and 130–131 (QV). The region spanning 37 to 115 (CTLYVGNLSY…RVIRADWDAG (79 aa)) is the RRM domain.

Belongs to the RRM NCBP2 family. In terms of assembly, component of the nuclear cap-binding complex (CBC), a heterodimer composed of ncbp-1 and ncbp-2 that interacts with m7GpppG-capped RNA.

The protein localises to the nucleus. In terms of biological role, component of the cap-binding complex (CBC), which binds co-transcriptionally to the 5' cap of pre-mRNAs and is involved in various processes such as pre-mRNA splicing and RNA-mediated gene silencing (RNAi). The CBC complex is involved in miRNA-mediated RNA interference and is required for primary microRNAs (miRNAs) processing. In the CBC complex, ncbp-2 recognizes and binds capped RNAs (m7GpppG-capped RNA) but requires ncbp-1 to stabilize the movement of its N-terminal loop and lock the CBC into a high affinity cap-binding state with the cap structure. This is Nuclear cap-binding protein subunit 2 (ncbp-2) from Caenorhabditis briggsae.